A 326-amino-acid polypeptide reads, in one-letter code: Neuferricin homolog (326 aa).

Positions 1-34 are cleaved as a signal peptide; it reads MEKNRRKKDDAGVMTKTLAGVAALTFLVSFICSS. Positions 98–197 constitute a Cytochrome b5 heme-binding domain; the sequence is KHVFTPEQLH…KEYPLVGVVA (100 aa).

It belongs to the cytochrome b5 family. MAPR subfamily.

The protein localises to the secreted. Functionally, heme-binding protein. This Caenorhabditis briggsae protein is Neuferricin homolog.